Reading from the N-terminus, the 443-residue chain is tRNA-2-methylthio-N(6)-dimethylallyladenosine synthase (443 aa).

Residues 1–114 enclose the MTTase N-terminal domain; that stretch reads MRFYIKTFGC…VTEAVKRALQ (114 aa). Cys10, Cys46, Cys79, Cys150, Cys154, and Cys157 together coordinate [4Fe-4S] cluster. The region spanning 136-367 is the Radical SAM core domain; it reads RSSKHHAWVT…MNLQKRINRK (232 aa). In terms of domain architecture, TRAM spans 370 to 431; that stretch reads ERYKGKTVRV…AGPLYGKVVW (62 aa).

The protein belongs to the methylthiotransferase family. MiaB subfamily. Monomer. It depends on [4Fe-4S] cluster as a cofactor.

Its subcellular location is the cytoplasm. The enzyme catalyses N(6)-dimethylallyladenosine(37) in tRNA + (sulfur carrier)-SH + AH2 + 2 S-adenosyl-L-methionine = 2-methylsulfanyl-N(6)-dimethylallyladenosine(37) in tRNA + (sulfur carrier)-H + 5'-deoxyadenosine + L-methionine + A + S-adenosyl-L-homocysteine + 2 H(+). Catalyzes the methylthiolation of N6-(dimethylallyl)adenosine (i(6)A), leading to the formation of 2-methylthio-N6-(dimethylallyl)adenosine (ms(2)i(6)A) at position 37 in tRNAs that read codons beginning with uridine. In Thermotoga sp. (strain RQ2), this protein is tRNA-2-methylthio-N(6)-dimethylallyladenosine synthase.